Here is a 419-residue protein sequence, read N- to C-terminus: MAGSGCAWGAEPPRFLEAFGRLWQVQSRLGSGSSASVYRVRCCGTPGSPPGALKQFLPPGTTGAAASAAEYGFRKERAALEQLQGHRNIVTLYGVFTIHFSPNVPSRCLLLELLDVSVSELLLYSSHQGCSMWMIQHCARDVLEALAFLHHEGYVHADLKPRNILWSAENECFKLIDFGLSFKEGNQDVKYIQTDGYRAPEAELQNCLAQAGLQSDTECTSAVDLWSLGIILLEMFSGMKLKHTVRSQEWKANSSAIIDHIFASKAVVNAAIPAYHLRDLIKSMLHDDPGRRIPAEMALCSPFFSIPFAPHIEDLVMLPTPVLRLLNVLDDDYLENEDEYEDVVEDVKEECQKYGPVVSLLVPKENPGRGQVFVEYANAGDSKAAQKLLTGRMFDGKFVVATFYPLSAYKRGYLYQTLL.

The 281-residue stretch at 23-303 (WQVQSRLGSG…PAEMALCSPF (281 aa)) folds into the Protein kinase domain. ATP-binding positions include 29 to 37 (LGSGSSASV) and Lys54. The Proton acceptor role is filled by Asp158. The RRM domain maps to 323 to 405 (LRLLNVLDDD…GKFVVATFYP (83 aa)).

The protein belongs to the protein kinase superfamily. Ser/Thr protein kinase family. As to quaternary structure, interacts with PAM and CDKN1B/p27Kip1. Interacts with stathmin.

The protein localises to the nucleus. The catalysed reaction is L-seryl-[protein] + ATP = O-phospho-L-seryl-[protein] + ADP + H(+). It catalyses the reaction L-threonyl-[protein] + ATP = O-phospho-L-threonyl-[protein] + ADP + H(+). Its function is as follows. Upon serum stimulation, phosphorylates CDKN1B/p27Kip1, thus controlling CDKN1B subcellular location and cell cycle progression in G1 phase. May be involved in trafficking and/or processing of RNA. In Mus musculus (Mouse), this protein is Serine/threonine-protein kinase Kist (Uhmk1).